A 319-amino-acid chain; its full sequence is N-acyl-aromatic-L-amino acid amidohydrolase (carboxylate-forming) (319 aa).

The hydrolytic domain stretch occupies residues 1-210 (MCSLPGSRKP…SILDFIELFN (210 aa)). Residues histidine 21 and glutamate 24 each coordinate Zn(2+). Substrate is bound by residues arginine 63 and 70–71 (NR). Histidine 116 lines the Zn(2+) pocket. Substrate contacts are provided by glutamate 178 and tyrosine 288. Residues 211–318 (QGMEFPAFEM…PGLTPSSTQT (108 aa)) form a shielding domain region. At threonine 318 the chain carries Phosphothreonine.

It belongs to the AspA/AstE family. Aspartoacylase subfamily. As to quaternary structure, exists as a mixture of homodimers and homotetramer, both catalytically active. The cofactor is Zn(2+).

It is found in the apical cell membrane. The protein localises to the cytoplasm. It carries out the reaction an N-acyl-aromatic L-alpha-amino acid + H2O = an aromatic L-alpha-amino acid + a carboxylate. It catalyses the reaction an N-acetyl-L-cysteine-S-conjugate + H2O = an S-substituted L-cysteine + acetate. Functionally, plays an important role in deacetylating mercapturic acids in kidney proximal tubules. Also acts on N-acetyl-aromatic amino acids. This chain is N-acyl-aromatic-L-amino acid amidohydrolase (carboxylate-forming) (Acy3), found in Rattus norvegicus (Rat).